We begin with the raw amino-acid sequence, 365 residues long: 1-deoxy-D-xylulose 5-phosphate reductoisomerase (365 aa).

Residues T7, G8, S9, I10, A31, K32, N33, and N114 each coordinate NADPH. K115 provides a ligand contact to 1-deoxy-D-xylulose 5-phosphate. NADPH is bound at residue E116. D134 provides a ligand contact to Mn(2+). 1-deoxy-D-xylulose 5-phosphate-binding residues include S135, E136, S158, and H181. Residue E136 coordinates Mn(2+). G187 serves as a coordination point for NADPH. The 1-deoxy-D-xylulose 5-phosphate site is built by S194, N199, K200, and E203. Residue E203 coordinates Mn(2+).

It belongs to the DXR family. Mg(2+) is required as a cofactor. Requires Mn(2+) as cofactor.

The catalysed reaction is 2-C-methyl-D-erythritol 4-phosphate + NADP(+) = 1-deoxy-D-xylulose 5-phosphate + NADPH + H(+). Its pathway is isoprenoid biosynthesis; isopentenyl diphosphate biosynthesis via DXP pathway; isopentenyl diphosphate from 1-deoxy-D-xylulose 5-phosphate: step 1/6. Functionally, catalyzes the NADPH-dependent rearrangement and reduction of 1-deoxy-D-xylulose-5-phosphate (DXP) to 2-C-methyl-D-erythritol 4-phosphate (MEP). The polypeptide is 1-deoxy-D-xylulose 5-phosphate reductoisomerase (Campylobacter curvus (strain 525.92)).